A 316-amino-acid polypeptide reads, in one-letter code: BTB/POZ domain-containing adapter for CUL3-mediated RhoA degradation protein 2 (316 aa).

The region spanning 28-96 (KYVQLNVGGS…LRDDTITLPQ (69 aa)) is the BTB domain. Residues 268–279 (EATSRSRSQASP) are compositionally biased toward polar residues. The interval 268–287 (EATSRSRSQASPSEDEETFE) is disordered. Position 278 is a phosphoserine (S278). The residue at position 280 (S280) is a Phosphoserine; by CK2.

The protein belongs to the BACURD family. As to quaternary structure, component of the BCR(TNFAIP1) E3 ubiquitin ligase complex, at least composed of CUL3, TNFAIP1/BACURD2 and RBX1. Interacts with RHOA; with a preference for RhoA-GDP. Interacts with RHOB. Interacts with PCNA. Interacts with CSNK2B. In terms of processing, phosphorylation at Ser-280 by CK2 facilitates the nucleus localization and increases interaction with PCNA.

It localises to the cytoplasm. The protein resides in the nucleus. It is found in the endosome. It participates in protein modification; protein ubiquitination. Substrate-specific adapter of a BCR (BTB-CUL3-RBX1) E3 ubiquitin-protein ligase complex involved in regulation of cytoskeleton structure. The BCR(TNFAIP1) E3 ubiquitin ligase complex mediates the ubiquitination of RHOA, leading to its degradation by the proteasome, thereby regulating the actin cytoskeleton and cell migration. Its interaction with RHOB may regulate apoptosis. May enhance the PCNA-dependent DNA polymerase delta activity. This chain is BTB/POZ domain-containing adapter for CUL3-mediated RhoA degradation protein 2 (TNFAIP1), found in Homo sapiens (Human).